The chain runs to 1516 residues: UDP-glucose:glycoprotein glucosyltransferase 2 (1516 aa).

The first 27 residues, 1-27, serve as a signal peptide directing secretion; that stretch reads MAPAKATNVVRLLLGSTALWLSQLGSG. N-linked (GlcNAc...) asparagine glycosylation is found at asparagine 256, asparagine 286, asparagine 920, and asparagine 950. A glucosyltransferase region spans residues 1220–1516; sequence LHKENKKEKD…QDTILTHDEL (297 aa). Phosphotyrosine is present on tyrosine 1289. A Prevents secretion from ER motif is present at residues 1513–1516; the sequence is HDEL.

This sequence belongs to the glycosyltransferase 8 family. Interacts with METTL23. Interacts with SELENOF. It depends on Ca(2+) as a cofactor. Mn(2+) is required as a cofactor. Higher levels in kidney, pancreas, heart, and skeletal muscle.

The protein resides in the endoplasmic reticulum lumen. It is found in the endoplasmic reticulum-Golgi intermediate compartment. It catalyses the reaction N(4)-(alpha-D-Man-(1-&gt;2)-alpha-D-Man-(1-&gt;2)-alpha-D-Man-(1-&gt;3)-[alpha-D-Man-(1-&gt;2)-alpha-D-Man-(1-&gt;3)-[alpha-D-Man-(1-&gt;2)-alpha-D-Man-(1-&gt;6)]-alpha-D-Man-(1-&gt;6)]-beta-D-Man-(1-&gt;4)-beta-D-GlcNAc-(1-&gt;4)-beta-D-GlcNAc)-L-asparaginyl-[protein] (N-glucan mannose isomer 9A1,2,3B1,2,3) + UDP-alpha-D-glucose = N(4)-(alpha-D-Glc-(1-&gt;3)-alpha-D-Man-(1-&gt;2)-alpha-D-Man-(1-&gt;2)-alpha-D-Man-(1-&gt;3)-[alpha-D-Man-(1-&gt;2)-alpha-D-Man-(1-&gt;3)-[alpha-D-Man-(1-&gt;2)-alpha-D-Man-(1-&gt;6)]-alpha-D-Man-(1-&gt;6)]-beta-D-Man-(1-&gt;4)-beta-D-GlcNAc-(1-&gt;4)-beta-D-GlcNAc)-L-asparaginyl-[protein] + UDP + H(+). It functions in the pathway protein modification; protein glycosylation. With respect to regulation, ethylenediaminetetraacetic acid completely abolishes catalytic activity. Catalytic activity is enhanced by complex formation with SELENOF. Functionally, recognizes glycoproteins with minor folding defects. Reglucosylates single N-glycans near the misfolded part of the protein, thus providing quality control for protein folding in the endoplasmic reticulum. Reglucosylated proteins are recognized by calreticulin for recycling to the endoplasmic reticulum and refolding or degradation. The chain is UDP-glucose:glycoprotein glucosyltransferase 2 (UGGT2) from Homo sapiens (Human).